The chain runs to 370 residues: Pyruvate dehydrogenase E1 component subunit alpha (370 aa).

As to quaternary structure, heterodimer of an alpha and a beta chain. The cofactor is thiamine diphosphate.

It carries out the reaction N(6)-[(R)-lipoyl]-L-lysyl-[protein] + pyruvate + H(+) = N(6)-[(R)-S(8)-acetyldihydrolipoyl]-L-lysyl-[protein] + CO2. Functionally, the pyruvate dehydrogenase complex catalyzes the overall conversion of pyruvate to acetyl-CoA and CO(2). It contains multiple copies of three enzymatic components: pyruvate dehydrogenase (E1), dihydrolipoamide acetyltransferase (E2) and lipoamide dehydrogenase (E3). The sequence is that of Pyruvate dehydrogenase E1 component subunit alpha (pdhA) from Staphylococcus epidermidis (strain ATCC 35984 / DSM 28319 / BCRC 17069 / CCUG 31568 / BM 3577 / RP62A).